The sequence spans 478 residues: Protein nucleotidyltransferase YdiU (478 aa).

Residues glycine 84, glycine 86, arginine 87, lysine 107, aspartate 119, glycine 120, arginine 170, and arginine 177 each contribute to the ATP site. The Proton acceptor role is filled by aspartate 246. Mg(2+) is bound by residues asparagine 247 and aspartate 256. ATP is bound at residue aspartate 256.

It belongs to the SELO family. Requires Mg(2+) as cofactor. Mn(2+) is required as a cofactor.

It catalyses the reaction L-seryl-[protein] + ATP = 3-O-(5'-adenylyl)-L-seryl-[protein] + diphosphate. The enzyme catalyses L-threonyl-[protein] + ATP = 3-O-(5'-adenylyl)-L-threonyl-[protein] + diphosphate. It carries out the reaction L-tyrosyl-[protein] + ATP = O-(5'-adenylyl)-L-tyrosyl-[protein] + diphosphate. The catalysed reaction is L-histidyl-[protein] + UTP = N(tele)-(5'-uridylyl)-L-histidyl-[protein] + diphosphate. It catalyses the reaction L-seryl-[protein] + UTP = O-(5'-uridylyl)-L-seryl-[protein] + diphosphate. The enzyme catalyses L-tyrosyl-[protein] + UTP = O-(5'-uridylyl)-L-tyrosyl-[protein] + diphosphate. In terms of biological role, nucleotidyltransferase involved in the post-translational modification of proteins. It can catalyze the addition of adenosine monophosphate (AMP) or uridine monophosphate (UMP) to a protein, resulting in modifications known as AMPylation and UMPylation. The sequence is that of Protein nucleotidyltransferase YdiU from Shigella boydii serotype 18 (strain CDC 3083-94 / BS512).